The chain runs to 434 residues: MQVSVEATQGLERRLTISVPAEQIEKLVKDSLQREAKRARIPGFRPGKVPITVINKRYGAAIRQDIMGEVMQRNFIEAIIAEKLNPAGAPTFVPGSTDGEKFEFIATFEIYPEVELKGLDAIEVEQPKAEVTDADVDTMIETLRKQHATFAAVEREAADGDKVKMNFVGSVDGEEFEGGKADDFELQLGSGRMIPGFEAGILGHKAGEEFVIDVNFPEEYHAENLKGKAAKFAITLTEVQAANLPEVNDEFAALFGISEGGLEALKAEIRKNMNRELEQALKANVKEQVINGLLANNDITLPKALIDGEVNVLRQQAMQRFGNQTANMPELPAELFTEQAARRVKIGLLLGEVIKTNELKAEDERVQGLIASMASAYEDPSEVVAYYNSNKELMQNMRNVALEEQAVEALLKSAKVTEKEVAFEEFMNKATGRA.

The PPIase FKBP-type domain occupies 160 to 245 (GDKVKMNFVG…LTEVQAANLP (86 aa)).

Belongs to the FKBP-type PPIase family. Tig subfamily.

It is found in the cytoplasm. It catalyses the reaction [protein]-peptidylproline (omega=180) = [protein]-peptidylproline (omega=0). In terms of biological role, involved in protein export. Acts as a chaperone by maintaining the newly synthesized protein in an open conformation. Functions as a peptidyl-prolyl cis-trans isomerase. In Shewanella baltica (strain OS223), this protein is Trigger factor.